A 166-amino-acid polypeptide reads, in one-letter code: Large ribosomal subunit protein uL10 (166 aa).

Belongs to the universal ribosomal protein uL10 family. In terms of assembly, part of the ribosomal stalk of the 50S ribosomal subunit. The N-terminus interacts with L11 and the large rRNA to form the base of the stalk. The C-terminus forms an elongated spine to which L12 dimers bind in a sequential fashion forming a multimeric L10(L12)X complex.

Forms part of the ribosomal stalk, playing a central role in the interaction of the ribosome with GTP-bound translation factors. In Streptococcus pneumoniae (strain 70585), this protein is Large ribosomal subunit protein uL10.